The primary structure comprises 122 residues: MIQMQTVLDAADNSGARKVQCIKVLGGSHRRYASVGDIIKVSVKDAIPRGKVKKGEVYNAVVVRTAKGVRRPDGSVVRFDRNAAVLLNNQLQPIGTRIFGPVTRELRGEKFMKIISLAPEVL.

Belongs to the universal ribosomal protein uL14 family. In terms of assembly, part of the 50S ribosomal subunit. Forms a cluster with proteins L3 and L19. In the 70S ribosome, L14 and L19 interact and together make contacts with the 16S rRNA in bridges B5 and B8.

Functionally, binds to 23S rRNA. Forms part of two intersubunit bridges in the 70S ribosome. This Thioalkalivibrio sulfidiphilus (strain HL-EbGR7) protein is Large ribosomal subunit protein uL14.